A 931-amino-acid chain; its full sequence is Protein translocase subunit SecA (931 aa).

ATP contacts are provided by residues Q87, 105–109 (GEGKT), and D515. The Zn(2+) site is built by C915, C917, C926, and H927.

The protein belongs to the SecA family. As to quaternary structure, monomer and homodimer. Part of the essential Sec protein translocation apparatus which comprises SecA, SecYEG and auxiliary proteins SecDF-YajC and YidC. The cofactor is Zn(2+).

The protein localises to the cell inner membrane. The protein resides in the cytoplasm. The enzyme catalyses ATP + H2O + cellular proteinSide 1 = ADP + phosphate + cellular proteinSide 2.. Part of the Sec protein translocase complex. Interacts with the SecYEG preprotein conducting channel. Has a central role in coupling the hydrolysis of ATP to the transfer of proteins into and across the cell membrane, serving both as a receptor for the preprotein-SecB complex and as an ATP-driven molecular motor driving the stepwise translocation of polypeptide chains across the membrane. This chain is Protein translocase subunit SecA, found in Burkholderia pseudomallei (strain 1106a).